Here is a 271-residue protein sequence, read N- to C-terminus: Mannosyl-3-phosphoglycerate phosphatase (271 aa).

Catalysis depends on Asp-13, which acts as the Nucleophile. Residues Asp-13, Asp-15, and Asp-214 each coordinate Mg(2+).

It belongs to the HAD-like hydrolase superfamily. MPGP family. Requires Mg(2+) as cofactor.

The protein localises to the cytoplasm. The enzyme catalyses 2-O-(alpha-D-mannosyl)-3-phosphoglycerate + H2O = (2R)-2-O-(alpha-D-mannosyl)-glycerate + phosphate. In Shigella dysenteriae serotype 1 (strain Sd197), this protein is Mannosyl-3-phosphoglycerate phosphatase (yedP).